The sequence spans 367 residues: Heme A synthase (367 aa).

The next 5 membrane-spanning stretches (helical) occupy residues 25–45 (ALRLWLGFVLLALFCLVLVGG), 111–131 (LIARGIGVIFALPLIFFWLTG), 139–159 (WPLVGILALGGLQGFIGWWMV), 174–194 (LATHLVMACLIFAGCMWIMRG), and 210–230 (GFAAAIAIFALFQIYLGALVA). Histidine 274 lines the heme pocket. The next 3 helical transmembrane spans lie at 276-296 (IGAYTLFALTLINMVIALRAA), 305-325 (AVVLFSLVTLQAAIGIATLLM), and 327-347 (VPLHWGLLHQAGALVVFGFAV). Histidine 335 serves as a coordination point for heme.

It belongs to the COX15/CtaA family. Type 2 subfamily. As to quaternary structure, interacts with CtaB. Requires heme b as cofactor.

The protein resides in the cell membrane. It carries out the reaction Fe(II)-heme o + 2 A + H2O = Fe(II)-heme a + 2 AH2. It participates in porphyrin-containing compound metabolism; heme A biosynthesis; heme A from heme O: step 1/1. In terms of biological role, catalyzes the conversion of heme O to heme A by two successive hydroxylations of the methyl group at C8. The first hydroxylation forms heme I, the second hydroxylation results in an unstable dihydroxymethyl group, which spontaneously dehydrates, resulting in the formyl group of heme A. This Rhizobium etli (strain CIAT 652) protein is Heme A synthase.